The following is a 401-amino-acid chain: Ribosomal RNA dihydrouridine synthase (401 aa).

FAD contacts are provided by alanine 15, aspartate 34, asparagine 35, arginine 41, glycine 47, asparagine 52, valine 132, glutamate 371, and phenylalanine 384.

The protein belongs to the BaiN/RdsA family. RdsA subfamily. FAD is required as a cofactor.

The enzyme catalyses a 5,6-dihydrouridine in mRNA + NAD(+) = a uridine in mRNA + NADH + H(+). Its function is as follows. Catalyzes the synthesis of 5,6-dihydrouridine (D) at position 2449 in 23S rRNA. This Haemophilus influenzae (strain ATCC 51907 / DSM 11121 / KW20 / Rd) protein is Ribosomal RNA dihydrouridine synthase.